The chain runs to 581 residues: Laccase-1 (581 aa).

The signal sequence occupies residues 1–25; the sequence is MENLGFLIISTFLLLFTTLLPYSSA. 2 Plastocyanin-like domains span residues 34–150 and 161–312; these read NVEW…PRQP and EIPI…YTGK. N-linked (GlcNAc...) asparagine glycosylation is present at Asn-80. The Cu cation site is built by His-84, His-86, His-129, and His-131. 4 N-linked (GlcNAc...) asparagine glycosylation sites follow: Asn-241, Asn-300, Asn-386, and Asn-403. Positions 429-565 constitute a Plastocyanin-like 3 domain; it reads DFPEKPPNRF…AMGFIVKDGP (137 aa). His-482, His-485, His-487, His-544, Cys-545, His-546, and His-550 together coordinate Cu cation.

Belongs to the multicopper oxidase family. The cofactor is Cu cation. In terms of tissue distribution, expressed in roots, stems and flowers.

The protein resides in the secreted. It is found in the extracellular space. Its subcellular location is the apoplast. It catalyses the reaction 4 hydroquinone + O2 = 4 benzosemiquinone + 2 H2O. Lignin degradation and detoxification of lignin-derived products. The chain is Laccase-1 (LAC1) from Arabidopsis thaliana (Mouse-ear cress).